Consider the following 480-residue polypeptide: EGF-like repeat and discoidin I-like domain-containing protein 3 (480 aa).

The first 23 residues, 1 to 23, serve as a signal peptide directing secretion; the sequence is MKHLVAAWLLVGLSLGVPQFGKG. The EGF-like 1 domain maps to 24-60; sequence DICNPNPCENGGICLSGLADDSFSCECPEGFAGPNCS. Disulfide bonds link C26–C37, C31–C48, and C50–C59. An O-linked (GalNAc...) threonine glycan is attached at T73. 2 EGF-like domains span residues 74-117 and 119-155; these read SAGP…IHCQ and NINE…RNCQ. Intrachain disulfides connect C78–C89, C83–C105, and C107–C116. The O-linked (Fuc...) threonine glycan is linked to T88. The Cell attachment site motif lies at 96–98; it reads RGD. 3 residues coordinate Ca(2+): N119, I120, and E122. 6 disulfides stabilise this stretch: C123/C134, C128/C143, C145/C154, C158/C314, C301/C305, and C319/C476. Ca(2+)-binding residues include D136 and L137. Residue N140 is glycosylated (N-linked (GlcNAc...) asparagine). 2 consecutive F5/8 type C domains span residues 158-314 and 319-476; these read CSGP…LLGC and CSEP…LLGC.

Expressed in angioblasts and early endothelial cells. By embryonic day 13.5, also expressed in a restricted group of non-endothelial cells including chondrocytes and retinal neurons.

It localises to the secreted. Functionally, promotes adhesion of endothelial cells through interaction with the alpha-v/beta-3 integrin receptor. Inhibits formation of vascular-like structures. May be involved in regulation of vascular morphogenesis of remodeling in embryonic development. In Mus musculus (Mouse), this protein is EGF-like repeat and discoidin I-like domain-containing protein 3 (Edil3).